A 452-amino-acid chain; its full sequence is tRNA modification GTPase MnmE (452 aa).

The (6S)-5-formyl-5,6,7,8-tetrahydrofolate site is built by R23, E81, and K120. The region spanning 217–373 is the TrmE-type G domain; that stretch reads GIKTAIIGQT…LVLRINQMYL (157 aa). K(+) is bound at residue N227. GTP is bound by residues 227 to 232, 246 to 252, and 271 to 274; these read NVGKSS, TDIPGTT, and DTAG. S231 provides a ligand contact to Mg(2+). Residues T246, I248, and T251 each coordinate K(+). Mg(2+) is bound at residue T252. K452 is a binding site for (6S)-5-formyl-5,6,7,8-tetrahydrofolate.

The protein belongs to the TRAFAC class TrmE-Era-EngA-EngB-Septin-like GTPase superfamily. TrmE GTPase family. Homodimer. Heterotetramer of two MnmE and two MnmG subunits. Requires K(+) as cofactor.

It is found in the cytoplasm. Exhibits a very high intrinsic GTPase hydrolysis rate. Involved in the addition of a carboxymethylaminomethyl (cmnm) group at the wobble position (U34) of certain tRNAs, forming tRNA-cmnm(5)s(2)U34. The protein is tRNA modification GTPase MnmE of Mycoplasma mycoides subsp. mycoides SC (strain CCUG 32753 / NCTC 10114 / PG1).